The primary structure comprises 904 residues: ADQETNTSNVHNTQLASTSEENSVETEQITTFHDVETPNRINTPMAQDTSSARSMDDTHSIIQFLQRPVLIDHIEVIAGSTADDNKPLNRYVLNRQNPQPFVKSWTLPSVVLSAGGKGQKLANFKYLRCDVKVKIVLNANPFIAGRLYLAYSPYDDRVDPARSILNTSRAGVTGYPGIEIDFQLDNSVEMTIPYASFQEAYDLVTGTEDFVKLYLFTITPILSPTSTSASSKVDLSVYMWLDNISLVIPTYRVNTSIVPNVGTVVQTVQNMTTRDSETIRKAMVALRKNNKSTYDYIVQALSSAVPEVKNVTMQINSKKNNSNKMATPVKEKTKNIPKPKTENPKIGPISELATGVNKVANGIERIPVIGEMAKPVTSTIKWVADKIGSVAAIFGWSKPRNLEQVNLYQNVPGWGYSLYKGIDNSVPLAFDPNNELGDLRDVFPSGVDEMAIGYVCGNPAVKHVLSWNTTDKVQAPISNGDDWGGVIPVGMPCYSKIIRTTENDTTRTNTEIMDPAPCEYVCNMFSYWRATMCYRIAIVKTAFHTGRLGIFFGPGKIPITTTKDNISPDLTQLDGIKAPSDNNYKYILDLTNDTEITIRVPFVSNKMFMKSTGIYGGNSENNWDFSESFTGFLCIRPITKFMCPETVSNNVSIVVWKWAEDVVVVEPKPLLSGPTQVFQPPVTSADSINTIDASMQINLANKADENVVTFFDSDDAEERNMEALLKGSGEQIMNLRSLLRTFRTISENWNLPPNTKTAITDLTDVADKEGRDYMSYLSYIYRFYRGGRRYKFFNTTALKQSQTCYVRSFLIPRYYTADNTNNDGPSHITYPVLNPVHEVEVPYYCQYRKLPVASTTDKGYDASLMYYSNVGTNQIVARAGNDDFTFGWLIGTPQTQGITRTETK.

Disordered stretches follow at residues 1 to 27, 35 to 54, and 320 to 348; these read ADQETNTSNVHNTQLASTSEENSVETE, VETPNRINTPMAQDTSSARS, and NNSNKMATPVKEKTKNIPKPKTENPKIGP. The span at 39-53 shows a compositional bias: polar residues; it reads NRINTPMAQDTSSAR. Positions 329–343 are enriched in basic and acidic residues; that stretch reads VKEKTKNIPKPKTEN.

This sequence belongs to the picornaviruses polyprotein family. Specific enzymatic cleavages in vivo yield mature proteins.

The protein localises to the virion. It localises to the host cytoplasm. In terms of biological role, structural polyprotein: precursor of all the viral capsid proteins. Functionally, forms, together with protein VP2 and protein VP3, an icosahedral capsid protecting the viral RNA genome. The icosahedral capsid has a pseudo-T=3 symmetry with a diameter of approximately 300 Angstroms, and is composed of 60 copies of each capsid proteins. Its function is as follows. Forms, together with protein VP1 and protein VP3, an icosahedral capsid protecting the viral RNA genome. The icosahedral capsid has a pseudo-T=3 symmetry with a diameter of approximately 300 Angstroms, and is composed of 60 copies of each capsid proteins. Forms, together with protein VP1 and protein VP2, an icosahedral capsid protecting the viral RNA genome. The icosahedral capsid has a pseudo-T=3 symmetry with a diameter of approximately 300 Angstroms, and is composed of 60 copies of each capsid proteins. The protein is Structural polyprotein of Apis mellifera (Honeybee).